Consider the following 324-residue polypeptide: Probable non-intrinsic ABC protein 5 (324 aa).

The region spanning 2 to 111 (DRERYDKVIE…ADLTLVMKDG (110 aa)) is the ABC transporter domain. A run of 2 helical transmembrane segments spans residues 212–232 (YITLAYGGALVPFILLGQILF) and 259–279 (LSTLMVVYVALAFGSSLCILV). The 103-residue stretch at 222–324 (VPFILLGQIL…TCSKTCIYSS (103 aa)) folds into the ABC transmembrane type-1 domain.

This sequence belongs to the ABC transporter superfamily.

It localises to the membrane. The chain is Probable non-intrinsic ABC protein 5 (NAP5) from Arabidopsis thaliana (Mouse-ear cress).